Reading from the N-terminus, the 468-residue chain is Zinc finger protein 672 (468 aa).

C2H2-type zinc fingers lie at residues 15 to 37 (YSCS…ERAH), 43 to 65 (FRCL…RWTH), 71 to 93 (YICS…LGTH), and 100 to 123 (CPCR…VRQH). The C2H2-type 5; degenerate zinc finger occupies 129–151 (HRCPLCARSFRQSALPFHLARAH). 9 C2H2-type zinc fingers span residues 167–189 (YHCT…SRIH), 202–224 (HRCG…LQRH), 230–252 (FKCP…QRTH), 258–280 (YACN…QRSH), 286–308 (HICA…QRSH), 314–336 (FPCP…LRTH), 342–364 (YHCE…LRNH), 370–392 (HKCP…RKTH), and 398–420 (AECT…QRSH).

Belongs to the krueppel C2H2-type zinc-finger protein family.

The protein localises to the nucleus. May be involved in transcriptional regulation. The polypeptide is Zinc finger protein 672 (Znf672) (Rattus norvegicus (Rat)).